The following is a 213-amino-acid chain: Heat shock protein 27 (213 aa).

A phosphoserine mark is found at S58 and S75. A sHSP domain is found at 71-182 (SRRASGGPNA…SERIVQIQQT (112 aa)). The interval 157–213 (VLTLKAPPPPSKEQAKSERIVQIQQTGPAHLSVKAPAPEAGDGKAENGSGEKMETSK) is disordered. Residues 197–213 (GDGKAENGSGEKMETSK) show a composition bias toward basic and acidic residues.

The protein belongs to the small heat shock protein (HSP20) family.

The chain is Heat shock protein 27 (Hsp27) from Drosophila melanogaster (Fruit fly).